Reading from the N-terminus, the 627-residue chain is DNA mismatch repair protein MutL (627 aa).

The protein belongs to the DNA mismatch repair MutL/HexB family.

In terms of biological role, this protein is involved in the repair of mismatches in DNA. It is required for dam-dependent methyl-directed DNA mismatch repair. May act as a 'molecular matchmaker', a protein that promotes the formation of a stable complex between two or more DNA-binding proteins in an ATP-dependent manner without itself being part of a final effector complex. This is DNA mismatch repair protein MutL from Mesorhizobium japonicum (strain LMG 29417 / CECT 9101 / MAFF 303099) (Mesorhizobium loti (strain MAFF 303099)).